A 486-amino-acid chain; its full sequence is Cardiolipin synthase A (486 aa).

The next 2 membrane-spanning stretches (helical) occupy residues 3 to 23 and 38 to 58; these read IFYNLIKCLIFSTYWLLIANI and MSWLLTIYIIPFIGISIWFFF. 2 PLD phosphodiesterase domains span residues 219 to 246 and 399 to 426; these read VDVRQHRKIILIDNYIAYSGSMNLVDPY and QKGLLHSKSILVDQQLSLIGTVNLDMRS. Residues His-224, Lys-226, Asp-231, His-404, Lys-406, and Asp-411 contribute to the active site.

Belongs to the phospholipase D family. Cardiolipin synthase subfamily. ClsA sub-subfamily.

The protein localises to the cell inner membrane. The enzyme catalyses 2 a 1,2-diacyl-sn-glycero-3-phospho-(1'-sn-glycerol) = a cardiolipin + glycerol. Catalyzes the reversible phosphatidyl group transfer from one phosphatidylglycerol molecule to another to form cardiolipin (CL) (diphosphatidylglycerol) and glycerol. The polypeptide is Cardiolipin synthase A (Buchnera aphidicola subsp. Acyrthosiphon pisum (strain 5A)).